A 1180-amino-acid chain; its full sequence is RecBCD enzyme subunit RecB (1180 aa).

The interval 1-852 is DNA-binding and helicase activity, interacts with RecC; it reads MITTIPKSIN…QSGKNHISTK (852 aa). The 446-residue stretch at 3–448 folds into the UvrD-like helicase ATP-binding domain; that stretch reads TTIPKSINVT…YFLDTNWRSS (446 aa). 24 to 31 provides a ligand contact to ATP; sequence ASAGTGKT. The UvrD-like helicase C-terminal domain maps to 478 to 745; that stretch reads SSRINKTTKF…KIVSIHKSKG (268 aa). The tract at residues 905–1180 is nuclease activity, interacts with RecD and RecA; sequence NYNFTSYSQL…EIIKKLEQIF (276 aa). The Mg(2+) site is built by H964, D1075, and D1088. The For nuclease activity role is filled by D1088.

Belongs to the helicase family. UvrD subfamily. In terms of assembly, heterotrimer of RecB, RecC and RecD. All subunits contribute to DNA-binding. Interacts with RecA. The cofactor is Mg(2+).

The catalysed reaction is Exonucleolytic cleavage (in the presence of ATP) in either 5'- to 3'- or 3'- to 5'-direction to yield 5'-phosphooligonucleotides.. It carries out the reaction Couples ATP hydrolysis with the unwinding of duplex DNA by translocating in the 3'-5' direction.. It catalyses the reaction ATP + H2O = ADP + phosphate + H(+). Its function is as follows. A helicase/nuclease that prepares dsDNA breaks (DSB) for recombinational DNA repair. Binds to DSBs and unwinds DNA via a highly rapid and processive ATP-dependent bidirectional helicase activity. Unwinds dsDNA until it encounters a Chi (crossover hotspot instigator) sequence from the 3' direction. Cuts ssDNA a few nucleotides 3' to the Chi site. The properties and activities of the enzyme are changed at Chi. The Chi-altered holoenzyme produces a long 3'-ssDNA overhang and facilitates RecA-binding to the ssDNA for homologous DNA recombination and repair. Holoenzyme degrades any linearized DNA that is unable to undergo homologous recombination. In the holoenzyme this subunit contributes ATPase, 3'-5' helicase, exonuclease activity and loads RecA onto ssDNA. This Buchnera aphidicola subsp. Baizongia pistaciae (strain Bp) protein is RecBCD enzyme subunit RecB.